The following is a 207-amino-acid chain: LexA repressor (207 aa).

The segment at residues 33–52 (VKEMSETFGISHASVHDRIN) is a DNA-binding region (H-T-H motif). Active-site for autocatalytic cleavage activity residues include Ser-129 and Lys-166.

This sequence belongs to the peptidase S24 family. In terms of assembly, homodimer.

The enzyme catalyses Hydrolysis of Ala-|-Gly bond in repressor LexA.. In terms of biological role, represses a number of genes involved in the response to DNA damage (SOS response), including recA and lexA. In the presence of single-stranded DNA, RecA interacts with LexA causing an autocatalytic cleavage which disrupts the DNA-binding part of LexA, leading to derepression of the SOS regulon and eventually DNA repair. The sequence is that of LexA repressor from Oleidesulfovibrio alaskensis (strain ATCC BAA-1058 / DSM 17464 / G20) (Desulfovibrio alaskensis).